The chain runs to 240 residues: Uridylate kinase (240 aa).

Position 13–16 (13–16) interacts with ATP; it reads KLSG. Residues 21 to 26 are involved in allosteric activation by GTP; it reads GDDGFG. Residue Gly55 participates in UMP binding. The ATP site is built by Gly56 and Arg60. UMP-binding positions include Asp75 and 136-143; that span reads IGNPYFST. Residues Asn164, Tyr170, and Asp173 each contribute to the ATP site.

Belongs to the UMP kinase family. Homohexamer.

The protein resides in the cytoplasm. It catalyses the reaction UMP + ATP = UDP + ADP. The protein operates within pyrimidine metabolism; CTP biosynthesis via de novo pathway; UDP from UMP (UMPK route): step 1/1. Its activity is regulated as follows. Allosterically activated by GTP. Inhibited by UTP. Its function is as follows. Catalyzes the reversible phosphorylation of UMP to UDP. The chain is Uridylate kinase from Staphylococcus saprophyticus subsp. saprophyticus (strain ATCC 15305 / DSM 20229 / NCIMB 8711 / NCTC 7292 / S-41).